We begin with the raw amino-acid sequence, 68 residues long: U19-ctenitoxin-Pn1a (68 aa).

Gln1 is subject to Pyrrolidone carboxylic acid. Cystine bridges form between Cys8-Cys19, Cys13-Cys28, Cys18-Cys51, Cys38-Cys59, and Cys53-Cys65.

Expressed by the venom gland.

It is found in the secreted. In terms of biological role, non-toxic to mice and insects. The polypeptide is U19-ctenitoxin-Pn1a (Phoneutria nigriventer (Brazilian armed spider)).